Consider the following 474-residue polypeptide: Glutathione synthetase (474 aa).

Ala2 bears the N-acetylalanine mark. Arg125 contacts substrate. Glu144 lines the ATP pocket. Mg(2+) contacts are provided by Glu144 and Asn146. Residues Val148 to Ser151, Glu214 to Asn216, Gln220, and Arg267 to Tyr270 each bind substrate. Residues Lys305, Lys364–Asn373, Tyr375, and Met398–Ile401 contribute to the ATP site. Glu368 provides a ligand contact to Mg(2+). A Phosphoserine modification is found at Ser415. Glu425 is an ATP binding site. Arg450 contacts substrate. The ATP site is built by Lys452 and Asp458. Residue Val461–Ala462 participates in substrate binding.

It belongs to the eukaryotic GSH synthase family. As to quaternary structure, homodimer. Requires Mg(2+) as cofactor.

It catalyses the reaction gamma-L-glutamyl-L-cysteine + glycine + ATP = glutathione + ADP + phosphate + H(+). The catalysed reaction is gamma-L-glutamyl-(2S)-2-aminobutanoate + glycine + ATP = ophthalmate + ADP + phosphate + H(+). It participates in sulfur metabolism; glutathione biosynthesis; glutathione from L-cysteine and L-glutamate: step 2/2. Functionally, catalyzes the production of glutathione from gamma-glutamylcysteine and glycine in an ATP-dependent manner. Glutathione (gamma-glutamylcysteinylglycine, GSH) is the most abundant intracellular thiol in living aerobic cells and is required for numerous processes including the protection of cells against oxidative damage, amino acid transport, the detoxification of foreign compounds, the maintenance of protein sulfhydryl groups in a reduced state and acts as a cofactor for a number of enzymes. Participates in ophthalmate biosynthesis in hepatocytes. This Bos taurus (Bovine) protein is Glutathione synthetase.